Consider the following 471-residue polypeptide: Glutamate--tRNA ligase 2 (471 aa).

The 'HIGH' region signature appears at 15–25 (PSPTGYLHIGG). Residues 243-247 (KLSKR) carry the 'KMSKS' region motif. ATP is bound at residue Lys246.

The protein belongs to the class-I aminoacyl-tRNA synthetase family. Glutamate--tRNA ligase type 1 subfamily. As to quaternary structure, monomer.

The protein resides in the cytoplasm. It carries out the reaction tRNA(Glu) + L-glutamate + ATP = L-glutamyl-tRNA(Glu) + AMP + diphosphate. Its function is as follows. Catalyzes the attachment of glutamate to tRNA(Glu) in a two-step reaction: glutamate is first activated by ATP to form Glu-AMP and then transferred to the acceptor end of tRNA(Glu). This Cereibacter sphaeroides (strain ATCC 17025 / ATH 2.4.3) (Rhodobacter sphaeroides) protein is Glutamate--tRNA ligase 2.